A 278-amino-acid chain; its full sequence is HAUS augmin-like complex subunit 1 (278 aa).

Coiled-coil stretches lie at residues 49–79 (RDVY…LMES), 124–177 (SDLF…KVDN), and 249–277 (SLAQ…DMME).

It belongs to the HAUS1 family. As to quaternary structure, component of the HAUS augmin-like complex. The complex interacts with the gamma-tubulin ring complex and this interaction is required for spindle assembly. Associates with microtubules. The interaction with microtubules is strong during mitosis, while it is weak or absent during interphase. It is unclear whether this interaction is direct or indirect. Interacts with EML3 (phosphorylated at 'Thr-881'). In terms of tissue distribution, widely expressed. Expressed in pancreas, kidney, skeletal muscle, liver and heart. Weakly expressed in lung, brain and placenta.

It localises to the cytoplasm. The protein localises to the cytoskeleton. Its subcellular location is the microtubule organizing center. The protein resides in the centrosome. It is found in the spindle. It localises to the spindle pole. Contributes to mitotic spindle assembly, maintenance of centrosome integrity and completion of cytokinesis as part of the HAUS augmin-like complex. The polypeptide is HAUS augmin-like complex subunit 1 (HAUS1) (Homo sapiens (Human)).